Reading from the N-terminus, the 1228-residue chain is Clustered mitochondria protein homolog (1228 aa).

Positions 298–557 (PSSLPSNSID…DNNPLDVGFA (260 aa)) constitute a Clu domain. The stretch at 486-519 (CYGFDEASNKVIADAEFGSSLDDFAKVFHLKKHE) is one TPR 1 repeat. Residues 671 to 702 (LGRVIELAEQELEAQRALREAHLQQVEADNKE) adopt a coiled-coil conformation. 2 TPR repeats span residues 982–1015 (AESY…YERV) and 1108–1141 (AVNE…FSKE).

This sequence belongs to the CLU family. As to quaternary structure, may associate with the eukaryotic translation initiation factor 3 (eIF-3) complex.

The protein localises to the cytoplasm. MRNA-binding protein involved in proper cytoplasmic distribution of mitochondria. The chain is Clustered mitochondria protein homolog from Eremothecium gossypii (strain ATCC 10895 / CBS 109.51 / FGSC 9923 / NRRL Y-1056) (Yeast).